Reading from the N-terminus, the 638-residue chain is 9-cis-epoxycarotenoid dioxygenase NCED1, chloroplastic (638 aa).

The transit peptide at 1 to 80 (MQRICPAHCS…QTEQEDEQLV (80 aa)) directs the protein to the chloroplast. 3 stretches are compositionally biased toward low complexity: residues 28–37 (AASAAPQSPS), 44–69 (ASAAPPSAAASTTVLTSPLVTTTRTP), and 92–102 (TTNGRAAPSQS). Disordered stretches follow at residues 28–80 (AASA…EQLV) and 92–113 (TTNGRAAPSQSRPRRRPAPAAA). Fe cation-binding residues include His-331, His-380, His-446, and His-624.

Belongs to the carotenoid oxygenase family. It depends on Fe(2+) as a cofactor.

It is found in the plastid. The protein resides in the chloroplast. It carries out the reaction a 9-cis-epoxycarotenoid + O2 = a 12'-apo-carotenal + 2-cis,4-trans-xanthoxin. It catalyses the reaction 9-cis-violaxanthin + O2 = (3S,5R,6S)-5,6-epoxy-3-hydroxy-5,6-dihydro-12'-apo-beta-caroten-12'-al + 2-cis,4-trans-xanthoxin. The enzyme catalyses 9'-cis-neoxanthin + O2 = (3S,5R,6R)-3,5-dihydroxy-6,7-didehydro-5,6-dihydro-12'-apo-beta-caroten-12'-al + 2-cis,4-trans-xanthoxin. In terms of biological role, has a 11,12(11',12') 9-cis epoxycarotenoid cleavage activity. Catalyzes the first step of abscisic-acid biosynthesis from carotenoids. This is 9-cis-epoxycarotenoid dioxygenase NCED1, chloroplastic from Oryza sativa subsp. japonica (Rice).